A 108-amino-acid polypeptide reads, in one-letter code: UPF0145 protein LJ_1287 (108 aa).

This sequence belongs to the UPF0145 family.

The polypeptide is UPF0145 protein LJ_1287 (Lactobacillus johnsonii (strain CNCM I-12250 / La1 / NCC 533)).